The sequence spans 348 residues: Actin maturation protease (348 aa).

Pro residues predominate over residues 1–18 (MISPCSPPLEPPVPPPET). Residues 1–64 (MISPCSPPLE…LPPPPRTTGF (64 aa)) form a disordered region. The segment covering 34–48 (NLPELAFPPSSFQAS) has biased composition (low complexity). The span at 49–60 (VPPPPPLPPPPR) shows a compositional bias: pro residues. The segment at 121-241 (SLIQEGPQCG…WAVSAGVLLG (121 aa)) is peptidase C39-like. Cys-129 is a catalytic residue. Ser-313 is subject to Phosphoserine.

Belongs to the ACTMAP family. As to quaternary structure, interacts (via N-terminus) with PFN2; the interaction may facilitate efficient cleavage of the acetylated N-terminus of immature actin. Interacts with PFN1.

The protein localises to the cytoplasm. The catalysed reaction is N-terminal N(alpha)-acetyl-L-methionyl-L-aspartyl-[protein] + H2O = N-terminal L-aspartyl-[protein] + N-acetyl-L-methionine. It catalyses the reaction N-terminal N(alpha)-acetyl-L-methionyl-L-glutamyl-[protein] + H2O = N-terminal L-glutamyl-[protein] + N-acetyl-L-methionine. It carries out the reaction N-terminal N(alpha)-acetyl-L-cysteinyl-L-aspartyl-[protein] + H2O = N-terminal L-aspartyl-[protein] + N-acetyl-L-cysteine. The enzyme catalyses N-terminal N(alpha)-acetyl-L-cysteinyl-L-glutamyl-[protein] + H2O = N-terminal L-glutamyl-[protein] + N-acetyl-L-cysteine. Its function is as follows. Actin maturation protease that specifically mediates the cleavage of immature acetylated N-terminal actin, thereby contributing to actin maturation. Cleaves N-terminal acetylated methionine of immature cytoplasmic beta- and gamma-actins ACTB and ACTG1 after translation. Cleaves N-terminal acetylated cysteine of muscle alpha-actins ACTA1, ACTC1 and ACTA2 after canonical removal of N-terminal methionine. This is Actin maturation protease from Bos taurus (Bovine).